The primary structure comprises 303 residues: MSVILVSAGYDHTIRFWEALTGVCSRTIQHSDSQVNRLEITNDKKLLATAGHQNVRLYDIRTTNPNPVASFEGHRGNVTSVSFQQDNRWMVTSSEDGTIKVWDVRSPSIPRNYKHNAPVNEVVIHPNQGELISCDRDGNIRIWDLGENQCTHQLTPEDDTSLQSLSMASDGSMLAAANTKGNCYVWEMPNHTDASHLKPVTKFRAHSTYITRILLSSDVKHLATCSADHTARVWSIDDDFKLETTLDGHQRWVWDCAFSADSAYLVTASSDHYVRLWDLSTREIVRQYGGHHKGAVCVALNDV.

WD repeat units follow at residues 1–27, 30–68, 73–112, 114–153, 157–196, 205–244, and 248–287; these read MSVILVSAGYDHTIRFWEALTGVCSRT, HSDSQVNRLEITNDKKLLATAGHQNVRLYDIRTTNPNPV, GHRGNVTSVSFQQDNRWMVTSSEDGTIKVWDVRSPSIPRN, KHNAPVNEVVIHPNQGELISCDRDGNIRIWDLGENQCTHQ, EDDTSLQSLSMASDGSMLAAANTKGNCYVWEMPNHTDASH, AHSTYITRILLSSDVKHLATCSADHTARVWSIDDDFKLET, and GHQRWVWDCAFSADSAYLVTASSDHYVRLWDLSTREIVRQ.

The protein belongs to the WD repeat LST8 family. In terms of assembly, the target of rapamycin complex 1 (TORC1) is composed of at least KOG1, LST8, TCO89 and either TOR1 (TORC1-A) or TOR2 (TORC1-B). TORC1 binds to and is inhibited by FKBP-rapamycin. Interacts with PIB2; following activation of PIB2 by glutamine or cysteine and as part of the TORC1 complex. The target of rapamycin complex 2 (TORC2) is composed of at least AVO1, AVO2, BIT61, LST8, TOR2 and TSC11. TORC2 forms a homodimer. Contrary to TORC1, TORC2 does not bind to and is not sensitive to FKBP-rapamycin. LST8 binds to the C-terminal kinase domain in TOR2.

The protein resides in the cell membrane. It is found in the vacuole membrane. Functionally, essential component of both TORC1 and TORC2. TORC1 regulates multiple cellular processes to control cell growth in response to environmental signals. Nutrient limitation and environmental stress signals cause inactivation of TORC1. Active TORC1 positively controls ribosome biogenesis via control of rRNA, ribosomal protein and tRNA gene expression, and rRNA processing. TORC1 positively controls protein biosynthesis by regulation of mRNA stability, translation initiation factor activity, and high-affinity amino acid permeases that serve to provide amino acids for use by the translation machinery. TORC1 also promotes growth by sequestering a number of nutrient and general stress-responsive transcription factors in the cytoplasm. TORC1 negatively controls macroautophagy, a process to recycle surplus cytoplasmic mass under nutrient starvation conditions. LST8 is involved in the negative regulation of transcription factors GLN3 and RTG1-RTG3, limiting the synthesis of alpha-ketoglutarate, glutamate and glutamine. LST8 is required for targeting of amino acid permeases (AAPs) to the plasma membrane. TORC2 regulates cell cycle-dependent polarization of the actin-cytoskeleton, cell wall integrity, and receptor endocytosis. TORC2 controls polarity of the actin cytoskeleton, which is required for orienting the secretory pathway toward discrete growth sites, via the RHO1/PKC1/MAPK cell integrity pathway. LST8 is involved in maintenance of cell wall integrity. LST8 modulates TOR2 kinase activity. The protein is Target of rapamycin complex subunit LST8 of Saccharomyces cerevisiae (strain ATCC 204508 / S288c) (Baker's yeast).